Here is a 208-residue protein sequence, read N- to C-terminus: ATP-dependent Clp protease proteolytic subunit (208 aa).

Ser-105 acts as the Nucleophile in catalysis. The active site involves His-130.

The protein belongs to the peptidase S14 family. Fourteen ClpP subunits assemble into 2 heptameric rings which stack back to back to give a disk-like structure with a central cavity, resembling the structure of eukaryotic proteasomes.

Its subcellular location is the cytoplasm. It carries out the reaction Hydrolysis of proteins to small peptides in the presence of ATP and magnesium. alpha-casein is the usual test substrate. In the absence of ATP, only oligopeptides shorter than five residues are hydrolyzed (such as succinyl-Leu-Tyr-|-NHMec, and Leu-Tyr-Leu-|-Tyr-Trp, in which cleavage of the -Tyr-|-Leu- and -Tyr-|-Trp bonds also occurs).. Its function is as follows. Cleaves peptides in various proteins in a process that requires ATP hydrolysis. Has a chymotrypsin-like activity. Plays a major role in the degradation of misfolded proteins. In Xylella fastidiosa (strain M23), this protein is ATP-dependent Clp protease proteolytic subunit.